We begin with the raw amino-acid sequence, 372 residues long: tRNA-specific 2-thiouridylase MnmA (372 aa).

Residues 6 to 13 (AMSGGVDS) and leucine 32 contribute to the ATP site. Cysteine 101 serves as the catalytic Nucleophile. Cysteines 101 and 193 form a disulfide. Glycine 125 is an ATP binding site. Residues 143–145 (KDQ) form an interaction with tRNA region. Cysteine 193 serves as the catalytic Cysteine persulfide intermediate.

It belongs to the MnmA/TRMU family.

It localises to the cytoplasm. The enzyme catalyses S-sulfanyl-L-cysteinyl-[protein] + uridine(34) in tRNA + AH2 + ATP = 2-thiouridine(34) in tRNA + L-cysteinyl-[protein] + A + AMP + diphosphate + H(+). Catalyzes the 2-thiolation of uridine at the wobble position (U34) of tRNA, leading to the formation of s(2)U34. This Corynebacterium kroppenstedtii (strain DSM 44385 / JCM 11950 / CIP 105744 / CCUG 35717) protein is tRNA-specific 2-thiouridylase MnmA.